The following is a 397-amino-acid chain: Lysophospholipid transporter LplT (397 aa).

The Periplasmic segment spans residues 1 to 17 (MSESVHTNTSLWSKGMK). Residues 18-38 (AVIVAQFLSAFGDNALLFATL) traverse the membrane as a helical segment. Residues 39–52 (ALLKAQFYPEWSQP) lie on the Cytoplasmic side of the membrane. The helical transmembrane segment at 53–73 (ILQMVFVGAYILFAPFVGQVA) threads the bilayer. The Periplasmic portion of the chain corresponds to 74–90 (DSFAKGRVMMFANGLKL). The helical transmembrane segment at 91 to 111 (LGAASICFGINPFLGYTLVGV) threads the bilayer. At 112–144 (GAAAYSPAKYGILGELTTGSKLVKANGLMEAST) the chain is on the cytoplasmic side. Residues 145-165 (IAAILLGSVAGGVLADWHVLV) traverse the membrane as a helical segment. A topological domain (periplasmic) is located at residue alanine 166. A helical transmembrane segment spans residues 167–187 (LAACALAYGGAVVANIYIPKL). The Cytoplasmic portion of the chain corresponds to 188 to 226 (AAARPGQSWNLINMTRSFLNACTSLWRNGETRFSLVGTS). The helical transmembrane segment at 227–247 (LFWGAGVTLRFLLVLWVPVAL) threads the bilayer. Topologically, residues 248 to 256 (GITDNATPT) are periplasmic. Residues 257–277 (YLNAMVAIGIVVGAGAAAKLV) form a helical membrane-spanning segment. Over 278-280 (TLE) the chain is Cytoplasmic. A helical transmembrane segment spans residues 281–301 (TVSRCMPAGILIGVVVLIFSL). The Periplasmic segment spans residues 302–304 (QHE). Residues 305 to 325 (QLPAYALLMLIGVLGGFFVVP) form a helical membrane-spanning segment. Over 326 to 343 (LNALLQERGKKSVGAGNA) the chain is Cytoplasmic. Residues 344–364 (IAVQNLGENSAMLLMLGIYSL) form a helical membrane-spanning segment. Residues 365–366 (AV) lie on the Periplasmic side of the membrane. The chain crosses the membrane as a helical span at residues 367 to 387 (MVGIPVVPIGIGFGALFALAI). Over 388-397 (TALWIWQRRH) the chain is Cytoplasmic.

It belongs to the major facilitator superfamily. LplT (TC 2.A.1.42) family.

The protein localises to the cell inner membrane. Its function is as follows. Catalyzes the facilitated diffusion of 2-acyl-glycero-3-phosphoethanolamine (2-acyl-GPE) into the cell. This chain is Lysophospholipid transporter LplT, found in Escherichia coli O157:H7 (strain EC4115 / EHEC).